The primary structure comprises 202 residues: 3-isopropylmalate dehydratase small subunit (202 aa).

The protein belongs to the LeuD family. LeuD type 1 subfamily. As to quaternary structure, heterodimer of LeuC and LeuD.

The catalysed reaction is (2R,3S)-3-isopropylmalate = (2S)-2-isopropylmalate. Its pathway is amino-acid biosynthesis; L-leucine biosynthesis; L-leucine from 3-methyl-2-oxobutanoate: step 2/4. Its function is as follows. Catalyzes the isomerization between 2-isopropylmalate and 3-isopropylmalate, via the formation of 2-isopropylmaleate. In Paenarthrobacter aurescens (strain TC1), this protein is 3-isopropylmalate dehydratase small subunit.